The sequence spans 122 residues: Large ribosomal subunit protein uL14 (122 aa).

This sequence belongs to the universal ribosomal protein uL14 family. As to quaternary structure, part of the 50S ribosomal subunit. Forms a cluster with proteins L3 and L19. In the 70S ribosome, L14 and L19 interact and together make contacts with the 16S rRNA in bridges B5 and B8.

Functionally, binds to 23S rRNA. Forms part of two intersubunit bridges in the 70S ribosome. This is Large ribosomal subunit protein uL14 from Campylobacter fetus subsp. fetus (strain 82-40).